A 531-amino-acid chain; its full sequence is UDP-glucuronosyltransferase 1A7 (531 aa).

The first 25 residues, 1-25 (MAPADFPASLPLCVCLLLASGLAQA), serve as a signal peptide directing secretion. N-linked (GlcNAc...) asparagine glycosylation is found at N293 and N431. The helical transmembrane segment at 489–509 (VIGFLLAIVLTVVFIVFKCCA) threads the bilayer.

This sequence belongs to the UDP-glycosyltransferase family. In terms of assembly, homodimer. Homooligomer. Interacts with UGT1A1, UGT1A3, UGT1A4, UGT1A6, UGT1A8, UGT1A9 and UGT1A10 to form heterodimers. As to expression, widely expressed with highest levels detected in colon and kidney.

Its subcellular location is the endoplasmic reticulum membrane. It carries out the reaction glucuronate acceptor + UDP-alpha-D-glucuronate = acceptor beta-D-glucuronoside + UDP + H(+). It catalyses the reaction 17alpha-estradiol + UDP-alpha-D-glucuronate = 17alpha-estradiol 3-O-(beta-D-glucuronate) + UDP + H(+). The enzyme catalyses prunetin + UDP-alpha-D-glucuronate = prunetin-5-O-beta-D-glucuronide + UDP. The catalysed reaction is 5-epi-5-F2t-IsoP + UDP-alpha-D-glucuronate = 5-epi-5-F2t-IsoP-glucuronide + UDP + H(+). It carries out the reaction (E)-ferulate + UDP-alpha-D-glucuronate = (E)-ferulic acid beta-D-glucuronate ester + UDP. It catalyses the reaction candesartan + UDP-alpha-D-glucuronate = candesartan O-beta-D-glucuronoside + UDP. The enzyme catalyses SN-38 + UDP-alpha-D-glucuronate = SN-38 O-beta-D-glucuronide + UDP + H(+). The catalysed reaction is mycophenolate + UDP-alpha-D-glucuronate = mycophenolate 7-O-beta-D-glucuronide + UDP + H(+). UDP-glucuronosyltransferase (UGT) that catalyzes phase II biotransformation reactions in which lipophilic substrates are conjugated with glucuronic acid to increase the metabolite's water solubility, thereby facilitating excretion into either the urine or bile. Essential for the elimination and detoxification of drugs, xenobiotics and endogenous compounds. Catalyzes the glucuronidation of endogenous estrogen hormone epiestradiol. Involved in the glucuronidation of F2-isoprostane (5-epi-5-F2t-IsoP). Involved in the glucuronidation of the phytochemical ferulic acid at the carboxylic acid group. Also catalyzes the glucuronidation of the isoflavones genistein, daidzein, glycitein, formononetin, biochanin A and prunetin, which are phytoestrogens with anticancer and cardiovascular properties. Involved in the glucuronidation of the AGTR1 angiotensin receptor antagonist caderastan, a drug which can inhibit the effect of angiotensin II. Involved in the biotransformation of 7-ethyl-10-hydroxycamptothecin (SN-38), the pharmacologically active metabolite of the anticancer drug irinotecan. Also metabolizes mycophenolate, an immunosuppressive agent. This is UDP-glucuronosyltransferase 1A7 from Mus musculus (Mouse).